The primary structure comprises 156 residues: Ribosomal RNA large subunit methyltransferase H (156 aa).

S-adenosyl-L-methionine contacts are provided by residues Gly-104 and 123–128 (LSPMVM).

This sequence belongs to the RNA methyltransferase RlmH family. As to quaternary structure, homodimer.

It localises to the cytoplasm. It catalyses the reaction pseudouridine(1915) in 23S rRNA + S-adenosyl-L-methionine = N(3)-methylpseudouridine(1915) in 23S rRNA + S-adenosyl-L-homocysteine + H(+). Specifically methylates the pseudouridine at position 1915 (m3Psi1915) in 23S rRNA. The sequence is that of Ribosomal RNA large subunit methyltransferase H from Bdellovibrio bacteriovorus (strain ATCC 15356 / DSM 50701 / NCIMB 9529 / HD100).